Reading from the N-terminus, the 197-residue chain is Large ribosomal subunit protein uL11 (197 aa).

The protein belongs to the universal ribosomal protein uL11 family. In terms of assembly, part of the ribosomal stalk of the 50S ribosomal subunit. Interacts with L10 and the large rRNA to form the base of the stalk. L10 forms an elongated spine to which L12 dimers bind in a sequential fashion forming a multimeric L10(L12)X complex. One or more lysine residues are methylated.

In terms of biological role, forms part of the ribosomal stalk which helps the ribosome interact with GTP-bound translation factors. The polypeptide is Large ribosomal subunit protein uL11 (Mycoplasmopsis pulmonis (strain UAB CTIP) (Mycoplasma pulmonis)).